We begin with the raw amino-acid sequence, 280 residues long: MKKEKLRTENISFQYPGAATYALKDVSFSLFEGEWVSVIGQNGSGKSTLAKLLNGLFLPEAGTITVNDTMILSEETVWDVRKQIGMVFQNPDNQFVGTTVQDDVVFGLENIGMPREQMVERLNQALRLVRMEDFLNDEPHSLSGGQKQRVAIAGVLALQPSILILDEATSMLDPQGRREVVETVRQLVNEKGITVLSITHDLEEAAQSDRVIILNKGEILEEGTPEQIFKSSHMLQEIGLDVPFSVKIAELLKRNEILLQNTHLTMESLVNELWRLHSKK.

The ABC transporter domain maps to 6 to 241 (LRTENISFQY…SHMLQEIGLD (236 aa)). 40–47 (GQNGSGKS) contacts ATP.

The protein belongs to the ABC transporter superfamily. Energy-coupling factor EcfA family. In terms of assembly, forms a stable energy-coupling factor (ECF) transporter complex composed of 2 membrane-embedded substrate-binding proteins (S component), 2 ATP-binding proteins (A component) and 2 transmembrane proteins (T component).

Its subcellular location is the cell membrane. ATP-binding (A) component of a common energy-coupling factor (ECF) ABC-transporter complex. Unlike classic ABC transporters this ECF transporter provides the energy necessary to transport a number of different substrates. The protein is Energy-coupling factor transporter ATP-binding protein EcfA1 of Bacillus thuringiensis subsp. konkukian (strain 97-27).